The following is a 209-amino-acid chain: Uracil phosphoribosyltransferase (209 aa).

5-phospho-alpha-D-ribose 1-diphosphate-binding positions include R79, R104, and 131–139 (DPMLATGNS). Residues I194 and 199 to 201 (GDA) contribute to the uracil site. Position 200 (D200) interacts with 5-phospho-alpha-D-ribose 1-diphosphate.

The protein belongs to the UPRTase family. It depends on Mg(2+) as a cofactor.

It catalyses the reaction UMP + diphosphate = 5-phospho-alpha-D-ribose 1-diphosphate + uracil. It functions in the pathway pyrimidine metabolism; UMP biosynthesis via salvage pathway; UMP from uracil: step 1/1. Allosterically activated by GTP. Functionally, catalyzes the conversion of uracil and 5-phospho-alpha-D-ribose 1-diphosphate (PRPP) to UMP and diphosphate. The protein is Uracil phosphoribosyltransferase of Variovorax paradoxus (strain S110).